A 490-amino-acid chain; its full sequence is METLDAIQLPYLGVVGASLIVILGIILLFPLGSDPFITINQHPRDLFQTKAKQQFEYNAAALLNEGLQTGHSAFRLVTNMVTYLILKDQYAEEIKNDSRFGAHEAVDPVLLVDLPGLESMFQGSLHNQVPPMAVRALNKELVHLTPSLSEEAMNCLQTRWTDSTEWHGVSIPETVLALIAQMTTRALLGPELCRNPEWLDIAKSFTTNRAIAVAAVQSWPSFLQPVIHWFLPPCRALRRQIQCARNIILPALERERRAYCSDQPTKREFSNLVFIDQYAKGARYDATMAQLRIIAVAFQTTSDLVEKVIARLCKHPELIEPLREEVVSVVGNHGLHRHSLRKLTLMESVMKETQRLEPAVIIGMFRLAKEKVTLKDGTVVPKGTNIAFANDLRFDPEMYLEPETFDGYRFQRMREDPAKIDLAPFTKTRMSHLAFGHGKHACPGRFLACDEAKLILCHILLNYDIRAVEGSPPELPGSWGNDVGEKTAGD.

Residues 12–32 (LGVVGASLIVILGIILLFPLG) traverse the membrane as a helical segment. Cys442 lines the heme pocket.

This sequence belongs to the cytochrome P450 family. Heme is required as a cofactor.

It localises to the membrane. It catalyses the reaction fumitremorgin C + 2 reduced [NADPH--hemoprotein reductase] + 2 O2 = 12alpha,13alpha-dihydroxyfumitremorgin C + 2 oxidized [NADPH--hemoprotein reductase] + 2 H2O + 2 H(+). It participates in mycotoxin biosynthesis. Cytochrome P450 monooxygenase; part of the gene cluster that mediates the biosynthesis of fumitremorgins, indole alkaloids that carry not only intriguing chemical structures, but also interesting biological and pharmacological activities. The biosynthesis of fumitremorgin-type alkaloids begins by condensation of the two amino acids L-tryptophan and L-proline to brevianamide F, catalyzed by the non-ribosomal peptide synthetase ftmA. Brevianamide F is then prenylated by the prenyltransferase ftmPT1/ftmB in the presence of dimethylallyl diphosphate, resulting in the formation of tryprostatin B. The three cytochrome P450 monooxygenases, ftmP450-1/ftmC, ftmP450-2/ftmE and ftmP450-3/FtmG, are responsible for the conversion of tryprostatin B to 6-hydroxytryprostatin B, tryprostatin A to fumitremorgin C and fumitremorgin C to 12,13-dihydroxyfumitremorgin C, respectively. The putative methyltransferase ftmMT/ftmD is expected for the conversion of 6-hydroxytryprostatin B to tryprostatin A. FtmPT2/FtmH catalyzes the prenylation of 12,13-dihydroxyfumitre-morgin C in the presence of dimethylallyl diphosphate, resulting in the formation of fumitremorgin B. Fumitremorgin B is further converted to verruculogen by ftmOx1/ftmF via the insertion of an endoperoxide bond between the two prenyl moieties. In some fungal species, verruculogen is further converted to fumitremorgin A, but the enzymes involved in this step have not been identified yet. In Aspergillus fumigatus (strain ATCC MYA-4609 / CBS 101355 / FGSC A1100 / Af293) (Neosartorya fumigata), this protein is Fumitremorgin C monooxygenase.